Here is a 100-residue protein sequence, read N- to C-terminus: UPF0213 protein YhbQ (100 aa).

A GIY-YIG domain is found at 2–77; sequence TPWFLYLIRT…KQLTKRQKER (76 aa).

It belongs to the UPF0213 family.

This is UPF0213 protein YhbQ from Escherichia coli O157:H7.